Consider the following 647-residue polypeptide: MIHGKMKRLKRYFTRALHRIQKGPGYTYKELLVWFCDNTNTHGPKRIIKEGPKKRVMWFILTLVFAGLVFWQWGVLILTYLSYGVSVSLSIGFKTMEFPAVTLCNANPFKYSRVKPLLKELDELVATALDRIQFSSQNQGNTFTHNNQTRQNVTLDPALWNHIPLVVIDETDPRNPIIHNIFDNNAVYSKNSSIRNSSEDQTSYSQRYKVAMKLCTNNNTQCVYRNFTSGVQALREWYLLQLSSIFSNVPLSGRIDMGFKAEDLILTCLFGGQPCSYRNFTHIYDADYGNCYIFNWGQEGENTMSSANPGADFGLKLVLDIEQGEYLPFLQTTAAARLILHQQRSFPFVKDLGIYAMPGTETSISVLVDQLEHMEAPYSSCTVNGSDIPVQNLYAEFNSSYSIQSCLRSCYQEEMVKTCKCAHYQYPLPNGSEYCTNMKHPDWVPCYYSLRDSVAIRENCISLCQQPCNDTHYKMVISMADWPSAGAEDWIFHVLSYEKDSSHNITVNRNGIVRLNIYFQEFNYRSISESEATNVVWLLSNLGGQFGFWMGGSVLCIIEFGEIIIDCMWITILKFLAWSRNRRQRRKRPQYSDPPPTVSELVEAHTNSGFQHDDGDHVPVDIPGTPPPNYDSLRVNTAEPVSSDEEN.

The Cytoplasmic portion of the chain corresponds to 1–57 (MIHGKMKRLKRYFTRALHRIQKGPGYTYKELLVWFCDNTNTHGPKRIIKEGPKKRVM). A helical membrane pass occupies residues 58 to 78 (WFILTLVFAGLVFWQWGVLIL). Residues 79 to 552 (TYLSYGVSVS…GGQFGFWMGG (474 aa)) are Extracellular-facing. Disulfide bonds link cysteine 104–cysteine 291, cysteine 215–cysteine 222, cysteine 268–cysteine 275, cysteine 381–cysteine 468, cysteine 406–cysteine 464, cysteine 410–cysteine 460, cysteine 419–cysteine 446, and cysteine 421–cysteine 435. Residues 553 to 573 (SVLCIIEFGEIIIDCMWITIL) traverse the membrane as a helical segment. The Cytoplasmic segment spans residues 574–647 (KFLAWSRNRR…AEPVSSDEEN (74 aa)). Positions 586–647 (RKRPQYSDPP…AEPVSSDEEN (62 aa)) are disordered.

This sequence belongs to the amiloride-sensitive sodium channel (TC 1.A.6) family. SCNN1B subfamily. As to quaternary structure, component of the heterotrimeric epithelial sodium channel (ENaC) composed of an alpha/SCNN1A, a beta/SCNN1B and a gamma/SCNN1G subunit.

Its subcellular location is the apical cell membrane. The protein localises to the cytoplasmic vesicle membrane. It catalyses the reaction Na(+)(in) = Na(+)(out). Its activity is regulated as follows. Originally identified and characterized by its inhibition by the diuretic drug amiloride. Functionally, this is one of the three pore-forming subunits of the heterotrimeric epithelial sodium channel (ENaC), a critical regulator of sodium balance and fluid homeostasis. ENaC operates in epithelial tissues, where it mediates the electrodiffusion of sodium ions from extracellular fluid through the apical membrane of cells, with water following osmotically. This chain is Epithelial sodium channel subunit beta (scnn1b-a), found in Xenopus laevis (African clawed frog).